Consider the following 353-residue polypeptide: Photosystem II D2 protein (353 aa).

At threonine 2 the chain carries N-acetylthreonine. A Phosphothreonine modification is found at threonine 2. Residues 41-61 form a helical membrane-spanning segment; the sequence is CAYFALGGWFTGTTFVTSWYT. Histidine 118 contacts chlorophyll a. The helical transmembrane segment at 125-141 threads the bilayer; it reads GFMLRQFELARSVQLRP. The pheophytin a site is built by glutamine 130 and asparagine 143. The helical transmembrane segment at 153 to 166 threads the bilayer; that stretch reads VFVSVFLIYPLGQS. Residue histidine 198 coordinates chlorophyll a. Residues 208-228 traverse the membrane as a helical segment; sequence AALLCAIHGATVENTLFEDGD. A plastoquinone-binding residues include histidine 215 and phenylalanine 262. Histidine 215 contacts Fe cation. Fe cation is bound at residue histidine 269. A helical transmembrane segment spans residues 279 to 295; that stretch reads GLWMSAIGVVGLALNLR.

The protein belongs to the reaction center PufL/M/PsbA/D family. As to quaternary structure, PSII is composed of 1 copy each of membrane proteins PsbA, PsbB, PsbC, PsbD, PsbE, PsbF, PsbH, PsbI, PsbJ, PsbK, PsbL, PsbM, PsbT, PsbX, PsbY, PsbZ, Psb30/Ycf12, at least 3 peripheral proteins of the oxygen-evolving complex and a large number of cofactors. It forms dimeric complexes. Requires The D1/D2 heterodimer binds P680, chlorophylls that are the primary electron donor of PSII, and subsequent electron acceptors. It shares a non-heme iron and each subunit binds pheophytin, quinone, additional chlorophylls, carotenoids and lipids. There is also a Cl(-1) ion associated with D1 and D2, which is required for oxygen evolution. The PSII complex binds additional chlorophylls, carotenoids and specific lipids. as cofactor.

It is found in the plastid. The protein localises to the chloroplast thylakoid membrane. It carries out the reaction 2 a plastoquinone + 4 hnu + 2 H2O = 2 a plastoquinol + O2. Functionally, photosystem II (PSII) is a light-driven water:plastoquinone oxidoreductase that uses light energy to abstract electrons from H(2)O, generating O(2) and a proton gradient subsequently used for ATP formation. It consists of a core antenna complex that captures photons, and an electron transfer chain that converts photonic excitation into a charge separation. The D1/D2 (PsbA/PsbD) reaction center heterodimer binds P680, the primary electron donor of PSII as well as several subsequent electron acceptors. D2 is needed for assembly of a stable PSII complex. This Saccharum hybrid (Sugarcane) protein is Photosystem II D2 protein.